We begin with the raw amino-acid sequence, 179 residues long: Ubiquitin-conjugating enzyme E2 C (179 aa).

Residues 1-14 (MASQNRDPAATSVT) show a composition bias toward polar residues. Positions 1 to 31 (MASQNRDPAATSVTAARKGAEPSGGAARGPV) are disordered. The residue at position 2 (alanine 2) is an N-acetylalanine. Residue serine 3 is modified to Phosphoserine. The region spanning 30 to 175 (PVGKRLQQEL…LQETYSKQVT (146 aa)) is the UBC core domain. Catalysis depends on cysteine 114, which acts as the Glycyl thioester intermediate.

It belongs to the ubiquitin-conjugating enzyme family. Component of the APC/C complex, composed of at least 14 distinct subunits that assemble into a complex of at least 19 chains with a combined molecular mass of around 1.2 MDa. Within this complex, directly interacts with ANAPC2. In terms of processing, autoubiquitinated by the APC/C complex, leading to its degradation by the proteasome. Its degradation plays a central role in APC/C regulation, allowing cyclin-A accumulation before S phase entry. APC/C substrates inhibit the autoubiquitination of UBE2C/UBCH10 but not its E2 function, hence APC/C remaining active until its substrates have been destroyed.

It catalyses the reaction S-ubiquitinyl-[E1 ubiquitin-activating enzyme]-L-cysteine + [E2 ubiquitin-conjugating enzyme]-L-cysteine = [E1 ubiquitin-activating enzyme]-L-cysteine + S-ubiquitinyl-[E2 ubiquitin-conjugating enzyme]-L-cysteine.. It carries out the reaction S-ubiquitinyl-[E1 ubiquitin-activating enzyme]-L-cysteine + [acceptor protein]-L-lysine = [E1 ubiquitin-activating enzyme]-L-cysteine + N(6)-monoubiquitinyl-[acceptor protein]-L-lysine.. It functions in the pathway protein modification; protein ubiquitination. Accepts ubiquitin from the E1 complex and catalyzes its covalent attachment to other proteins. In vitro catalyzes 'Lys-11'- and 'Lys-48'-linked polyubiquitination. Acts as an essential factor of the anaphase promoting complex/cyclosome (APC/C), a cell cycle-regulated ubiquitin ligase that controls progression through mitosis. Acts by initiating 'Lys-11'-linked polyubiquitin chains on APC/C substrates, leading to the degradation of APC/C substrates by the proteasome and promoting mitotic exit. The protein is Ubiquitin-conjugating enzyme E2 C (UBE2C) of Macaca fascicularis (Crab-eating macaque).